The chain runs to 92 residues: Large ribosomal subunit protein eL37 (92 aa).

Residues Cys19, Cys22, Cys34, and Cys37 each contribute to the Zn(2+) site. A C4-type zinc finger spans residues 19-37; the sequence is CRRCGRRSYHIQKSTCANC. Residues 50 to 92 are disordered; that stretch reads SEKAKRRKTTGSGRTAHLRDVHRRFKNGFQVGTPKGARGPENH.

Belongs to the eukaryotic ribosomal protein eL37 family. It depends on Zn(2+) as a cofactor.

Binds to the 23S rRNA. The chain is Large ribosomal subunit protein eL37 (rpl37) from Emericella nidulans (strain FGSC A4 / ATCC 38163 / CBS 112.46 / NRRL 194 / M139) (Aspergillus nidulans).